The sequence spans 1372 residues: DNA-directed RNA polymerase subunit beta (1372 aa).

The protein belongs to the RNA polymerase beta chain family. In terms of assembly, the RNAP catalytic core consists of 2 alpha, 1 beta, 1 beta' and 1 omega subunit. When a sigma factor is associated with the core the holoenzyme is formed, which can initiate transcription.

The catalysed reaction is RNA(n) + a ribonucleoside 5'-triphosphate = RNA(n+1) + diphosphate. Its function is as follows. DNA-dependent RNA polymerase catalyzes the transcription of DNA into RNA using the four ribonucleoside triphosphates as substrates. The protein is DNA-directed RNA polymerase subunit beta of Rickettsia bellii (strain RML369-C).